Reading from the N-terminus, the 304-residue chain is Oxygen-dependent coproporphyrinogen-III oxidase (304 aa).

Position 93 (Ser93) interacts with substrate. Positions 97 and 107 each coordinate a divalent metal cation. Residue His107 is the Proton donor of the active site. Residue 109 to 111 (NVR) coordinates substrate. Residues His146 and His176 each coordinate a divalent metal cation. The tract at residues 241 to 276 (YVEFNLVYDRGTLFGLQSGGRTESILMSLPPQVRWG) is important for dimerization. 259-261 (GGR) is a substrate binding site.

It belongs to the aerobic coproporphyrinogen-III oxidase family. As to quaternary structure, homodimer. The cofactor is a divalent metal cation.

It localises to the cytoplasm. The catalysed reaction is coproporphyrinogen III + O2 + 2 H(+) = protoporphyrinogen IX + 2 CO2 + 2 H2O. It functions in the pathway porphyrin-containing compound metabolism; protoporphyrin-IX biosynthesis; protoporphyrinogen-IX from coproporphyrinogen-III (O2 route): step 1/1. Functionally, involved in the heme biosynthesis. Catalyzes the aerobic oxidative decarboxylation of propionate groups of rings A and B of coproporphyrinogen-III to yield the vinyl groups in protoporphyrinogen-IX. In Pseudomonas savastanoi pv. phaseolicola (strain 1448A / Race 6) (Pseudomonas syringae pv. phaseolicola (strain 1448A / Race 6)), this protein is Oxygen-dependent coproporphyrinogen-III oxidase.